Consider the following 354-residue polypeptide: Hydrophobic dipeptide epimerase (354 aa).

Residues T134, K159, and 159-161 each bind substrate; that span reads KIK. Mg(2+) is bound at residue D189. Position 191 (N191) interacts with substrate. Mg(2+) contacts are provided by E215 and D240. Substrate-binding positions include K264, 292 to 295, and 318 to 320; these read CMAE and DLD.

It belongs to the mandelate racemase/muconate lactonizing enzyme family. Mg(2+) serves as cofactor.

In terms of biological role, catalyzes the epimerization of L-Ile-L-Tyr to L-Ile-D-Tyr (in vitro). Catalyzes the epimerization of dipeptides, with a preference for substrates with a hydrophobic or basic amino acid in the first position, followed by an aromatic residue in the second position. Has epimerase activity with L-Ile-L-Tyr, L-Val-L-Tyr and L-Arg-L-Tyr (in vitro). The chain is Hydrophobic dipeptide epimerase from Enterococcus faecalis (strain ATCC 700802 / V583).